A 333-amino-acid polypeptide reads, in one-letter code: Holliday junction branch migration complex subunit RuvB (333 aa).

The segment at 4 to 185 (IDRLVSTDVL…FGIVQRLEFY (182 aa)) is large ATPase domain (RuvB-L). ATP-binding positions include isoleucine 24, arginine 25, glycine 66, lysine 69, threonine 70, threonine 71, 132–134 (EDY), arginine 175, tyrosine 185, and arginine 222. Threonine 70 contributes to the Mg(2+) binding site. Residues 186–256 (SVPDLEHIVS…IAIKALEMLN (71 aa)) form a small ATPAse domain (RuvB-S) region. The tract at residues 259-333 (KEGLDYMDSK…HAYQHFICGG (75 aa)) is head domain (RuvB-H). Positions 295, 314, and 319 each coordinate DNA.

The protein belongs to the RuvB family. In terms of assembly, homohexamer. Forms an RuvA(8)-RuvB(12)-Holliday junction (HJ) complex. HJ DNA is sandwiched between 2 RuvA tetramers; dsDNA enters through RuvA and exits via RuvB. An RuvB hexamer assembles on each DNA strand where it exits the tetramer. Each RuvB hexamer is contacted by two RuvA subunits (via domain III) on 2 adjacent RuvB subunits; this complex drives branch migration. In the full resolvosome a probable DNA-RuvA(4)-RuvB(12)-RuvC(2) complex forms which resolves the HJ.

It localises to the cytoplasm. It catalyses the reaction ATP + H2O = ADP + phosphate + H(+). The RuvA-RuvB-RuvC complex processes Holliday junction (HJ) DNA during genetic recombination and DNA repair, while the RuvA-RuvB complex plays an important role in the rescue of blocked DNA replication forks via replication fork reversal (RFR). RuvA specifically binds to HJ cruciform DNA, conferring on it an open structure. The RuvB hexamer acts as an ATP-dependent pump, pulling dsDNA into and through the RuvAB complex. RuvB forms 2 homohexamers on either side of HJ DNA bound by 1 or 2 RuvA tetramers; 4 subunits per hexamer contact DNA at a time. Coordinated motions by a converter formed by DNA-disengaged RuvB subunits stimulates ATP hydrolysis and nucleotide exchange. Immobilization of the converter enables RuvB to convert the ATP-contained energy into a lever motion, pulling 2 nucleotides of DNA out of the RuvA tetramer per ATP hydrolyzed, thus driving DNA branch migration. The RuvB motors rotate together with the DNA substrate, which together with the progressing nucleotide cycle form the mechanistic basis for DNA recombination by continuous HJ branch migration. Branch migration allows RuvC to scan DNA until it finds its consensus sequence, where it cleaves and resolves cruciform DNA. This chain is Holliday junction branch migration complex subunit RuvB, found in Hamiltonella defensa subsp. Acyrthosiphon pisum (strain 5AT).